We begin with the raw amino-acid sequence, 60 residues long: Cytochrome c oxidase subunit 7, mitochondrial (60 aa).

The Mitochondrial matrix portion of the chain corresponds to 2 to 29 (ANKVIQLQKIFQSSTKPLWWRHPRSALY). The helical transmembrane segment at 30–53 (LYPFYAIFAVAVVTPLLYIPNAIR) threads the bilayer. At 54-60 (GIKAKKA) the chain is on the mitochondrial intermembrane side.

Belongs to the cytochrome c oxidase VIIa family. As to quaternary structure, component of the cytochrome c oxidase (complex IV, CIV), a multisubunit enzyme composed of 12 subunits. The complex is composed of a catalytic core of 3 subunits COX1, COX2 and COX3, encoded in the mitochondrial DNA, and 9 supernumerary subunits COX4, COX5A (or COX5B), COX6, COX7, COX8, COX9, COX12, COX13 and COX26, which are encoded in the nuclear genome. The complex exists as a monomer or a dimer and forms supercomplexes (SCs) in the inner mitochondrial membrane with a dimer of ubiquinol-cytochrome c oxidoreductase (cytochrome b-c1 complex, complex III, CIII), resulting in 2 different assemblies (supercomplexes III(2)IV and III(2)IV(2)).

The protein localises to the mitochondrion inner membrane. It participates in energy metabolism; oxidative phosphorylation. Functionally, component of the cytochrome c oxidase, the last enzyme in the mitochondrial electron transport chain which drives oxidative phosphorylation. The respiratory chain contains 3 multisubunit complexes succinate dehydrogenase (complex II, CII), ubiquinol-cytochrome c oxidoreductase (cytochrome b-c1 complex, complex III, CIII) and cytochrome c oxidase (complex IV, CIV), that cooperate to transfer electrons derived from NADH and succinate to molecular oxygen, creating an electrochemical gradient over the inner membrane that drives transmembrane transport and the ATP synthase. Cytochrome c oxidase is the component of the respiratory chain that catalyzes the reduction of oxygen to water. Electrons originating from reduced cytochrome c in the intermembrane space (IMS) are transferred via the dinuclear copper A center (CU(A)) of COX2 and heme A of COX1 to the active site in COX1, a binuclear center (BNC) formed by heme A3 and copper B (CU(B)). The BNC reduces molecular oxygen to 2 water molecules using 4 electrons from cytochrome c in the IMS and 4 protons from the mitochondrial matrix. This is Cytochrome c oxidase subunit 7, mitochondrial (COX7) from Saccharomyces cerevisiae (strain ATCC 204508 / S288c) (Baker's yeast).